The chain runs to 308 residues: Ribonuclease Z (308 aa).

Zn(2+) is bound by residues H63, H65, D67, H68, H141, D212, and H270. The Proton acceptor role is filled by D67.

This sequence belongs to the RNase Z family. Homodimer. The cofactor is Zn(2+).

The catalysed reaction is Endonucleolytic cleavage of RNA, removing extra 3' nucleotides from tRNA precursor, generating 3' termini of tRNAs. A 3'-hydroxy group is left at the tRNA terminus and a 5'-phosphoryl group is left at the trailer molecule.. Its function is as follows. Zinc phosphodiesterase, which displays some tRNA 3'-processing endonuclease activity. Probably involved in tRNA maturation, by removing a 3'-trailer from precursor tRNA. This chain is Ribonuclease Z, found in Pediococcus pentosaceus (strain ATCC 25745 / CCUG 21536 / LMG 10740 / 183-1w).